We begin with the raw amino-acid sequence, 429 residues long: Cell cycle protein kinase spo4 (429 aa).

A Protein kinase domain is found at tyrosine 40–phenylalanine 402. ATP is bound by residues valine 46–valine 54 and lysine 95. Aspartate 182 functions as the Proton acceptor in the catalytic mechanism. Position 264 is a phosphothreonine (threonine 264).

The protein belongs to the protein kinase superfamily. Ser/Thr protein kinase family. CDC7 subfamily. In terms of assembly, interacts with spo6.

Its subcellular location is the nucleus. It catalyses the reaction L-seryl-[protein] + ATP = O-phospho-L-seryl-[protein] + ADP + H(+). The enzyme catalyses L-threonyl-[protein] + ATP = O-phospho-L-threonyl-[protein] + ADP + H(+). Required for the initiation of meiosis II and progression through anaphase II. This chain is Cell cycle protein kinase spo4 (spo4), found in Schizosaccharomyces pombe (strain 972 / ATCC 24843) (Fission yeast).